The following is a 216-amino-acid chain: GTP cyclohydrolase 1 2 (216 aa).

The protein belongs to the GTP cyclohydrolase I family. Homomer.

It carries out the reaction GTP + H2O = 7,8-dihydroneopterin 3'-triphosphate + formate + H(+). It functions in the pathway cofactor biosynthesis; 7,8-dihydroneopterin triphosphate biosynthesis; 7,8-dihydroneopterin triphosphate from GTP: step 1/1. This is GTP cyclohydrolase 1 2 (folE2) from Nostoc sp. (strain PCC 7120 / SAG 25.82 / UTEX 2576).